Consider the following 395-residue polypeptide: Probable L-tyrosine/L-aspartate decarboxylase (395 aa).

Lys242 bears the N6-(pyridoxal phosphate)lysine mark.

This sequence belongs to the group II decarboxylase family. MfnA subfamily. Pyridoxal 5'-phosphate is required as a cofactor.

The catalysed reaction is L-tyrosine + H(+) = tyramine + CO2. It catalyses the reaction L-aspartate + H(+) = beta-alanine + CO2. It functions in the pathway cofactor biosynthesis; methanofuran biosynthesis. The protein operates within cofactor biosynthesis; coenzyme A biosynthesis. Functionally, catalyzes the decarboxylation of L-tyrosine to produce tyramine for methanofuran biosynthesis. Can also catalyze the decarboxylation of L-aspartate to produce beta-alanine for coenzyme A (CoA) biosynthesis. The protein is Probable L-tyrosine/L-aspartate decarboxylase of Methanosarcina acetivorans (strain ATCC 35395 / DSM 2834 / JCM 12185 / C2A).